Consider the following 241-residue polypeptide: Probable transcriptional regulatory protein Rmet_0785 (241 aa).

Belongs to the TACO1 family.

It is found in the cytoplasm. The chain is Probable transcriptional regulatory protein Rmet_0785 from Cupriavidus metallidurans (strain ATCC 43123 / DSM 2839 / NBRC 102507 / CH34) (Ralstonia metallidurans).